The chain runs to 378 residues: Dual-specificity RNA methyltransferase RlmN (378 aa).

Glu96 acts as the Proton acceptor in catalysis. In terms of domain architecture, Radical SAM core spans 102–340; that stretch reads DNGRGTLCVS…ATVRTTRGDD (239 aa). A disulfide bridge connects residues Cys109 and Cys345. Positions 116, 120, and 123 each coordinate [4Fe-4S] cluster. Residues 170-171, Ser202, 224-226, and Asn302 contribute to the S-adenosyl-L-methionine site; these read GE and SLH. The active-site S-methylcysteine intermediate is Cys345.

This sequence belongs to the radical SAM superfamily. RlmN family. Requires [4Fe-4S] cluster as cofactor.

The protein resides in the cytoplasm. It carries out the reaction adenosine(2503) in 23S rRNA + 2 reduced [2Fe-2S]-[ferredoxin] + 2 S-adenosyl-L-methionine = 2-methyladenosine(2503) in 23S rRNA + 5'-deoxyadenosine + L-methionine + 2 oxidized [2Fe-2S]-[ferredoxin] + S-adenosyl-L-homocysteine. It catalyses the reaction adenosine(37) in tRNA + 2 reduced [2Fe-2S]-[ferredoxin] + 2 S-adenosyl-L-methionine = 2-methyladenosine(37) in tRNA + 5'-deoxyadenosine + L-methionine + 2 oxidized [2Fe-2S]-[ferredoxin] + S-adenosyl-L-homocysteine. Its function is as follows. Specifically methylates position 2 of adenine 2503 in 23S rRNA and position 2 of adenine 37 in tRNAs. m2A2503 modification seems to play a crucial role in the proofreading step occurring at the peptidyl transferase center and thus would serve to optimize ribosomal fidelity. This chain is Dual-specificity RNA methyltransferase RlmN, found in Hahella chejuensis (strain KCTC 2396).